The sequence spans 239 residues: ATP-dependent dethiobiotin synthetase BioD (239 aa).

An ATP-binding site is contributed by Glu15–Phe20. Thr19 contacts Mg(2+). Lys40 is an active-site residue. Residues Asp57, Glu118 to Gly121, and Asn178 to His179 each bind ATP. Residues Asp57 and Glu118 each contribute to the Mg(2+) site.

The protein belongs to the dethiobiotin synthetase family. As to quaternary structure, homodimer. It depends on Mg(2+) as a cofactor.

The protein resides in the cytoplasm. The catalysed reaction is (7R,8S)-7,8-diammoniononanoate + CO2 + ATP = (4R,5S)-dethiobiotin + ADP + phosphate + 3 H(+). It participates in cofactor biosynthesis; biotin biosynthesis; biotin from 7,8-diaminononanoate: step 1/2. In terms of biological role, catalyzes a mechanistically unusual reaction, the ATP-dependent insertion of CO2 between the N7 and N8 nitrogen atoms of 7,8-diaminopelargonic acid (DAPA, also called 7,8-diammoniononanoate) to form a ureido ring. The protein is ATP-dependent dethiobiotin synthetase BioD of Burkholderia cenocepacia (strain HI2424).